Reading from the N-terminus, the 211-residue chain is MPVIAVVDYEMGNLHSVCKGLEKAGATPNVTYSPKELEQADAIVLPGVGAFDPAVQHLRARGLEQPIKDAIASGKPFLGICLGLQILFESSAEGTQPGLGIIKGKVRRFRPEPDITIPHMGWNQLEMTQAKSILWEHLPSDPWVYFVHSYYVDPIDPLIRAATITHGTQTVTAAIAHENLMAVQFHPEKSSNIGLQILSNFVAQVREKIPA.

Residues Val-3–Ala-211 form the Glutamine amidotransferase type-1 domain. Cys-81 (nucleophile) is an active-site residue. Active-site residues include His-186 and Glu-188.

Heterodimer of HisH and HisF.

The protein localises to the cytoplasm. It carries out the reaction 5-[(5-phospho-1-deoxy-D-ribulos-1-ylimino)methylamino]-1-(5-phospho-beta-D-ribosyl)imidazole-4-carboxamide + L-glutamine = D-erythro-1-(imidazol-4-yl)glycerol 3-phosphate + 5-amino-1-(5-phospho-beta-D-ribosyl)imidazole-4-carboxamide + L-glutamate + H(+). The catalysed reaction is L-glutamine + H2O = L-glutamate + NH4(+). It functions in the pathway amino-acid biosynthesis; L-histidine biosynthesis; L-histidine from 5-phospho-alpha-D-ribose 1-diphosphate: step 5/9. In terms of biological role, IGPS catalyzes the conversion of PRFAR and glutamine to IGP, AICAR and glutamate. The HisH subunit catalyzes the hydrolysis of glutamine to glutamate and ammonia as part of the synthesis of IGP and AICAR. The resulting ammonia molecule is channeled to the active site of HisF. The chain is Imidazole glycerol phosphate synthase subunit HisH from Nostoc punctiforme (strain ATCC 29133 / PCC 73102).